Consider the following 288-residue polypeptide: Protoheme IX farnesyltransferase (288 aa).

A run of 9 helical transmembrane segments spans residues 8–28 (ATKP…FLLA), 35–55 (YLIF…GCVL), 80–100 (ISIL…IYLL), 107–127 (LTML…TKCM), 132–152 (IYST…GYCA), 162–182 (LLLL…IAIL), 208–228 (IVIY…SGYT), 229–249 (TSYQ…YLAL), and 266–286 (FIFS…DSIF).

Belongs to the UbiA prenyltransferase family. Protoheme IX farnesyltransferase subfamily.

The protein resides in the cell membrane. It catalyses the reaction heme b + (2E,6E)-farnesyl diphosphate + H2O = Fe(II)-heme o + diphosphate. The protein operates within porphyrin-containing compound metabolism; heme O biosynthesis; heme O from protoheme: step 1/1. Functionally, converts heme B (protoheme IX) to heme O by substitution of the vinyl group on carbon 2 of heme B porphyrin ring with a hydroxyethyl farnesyl side group. This chain is Protoheme IX farnesyltransferase, found in Baumannia cicadellinicola subsp. Homalodisca coagulata.